The chain runs to 251 residues: Triosephosphate isomerase (251 aa).

9–11 (NWK) contacts substrate. Histidine 96 serves as the catalytic Electrophile. Glutamate 168 functions as the Proton acceptor in the catalytic mechanism. Residues glycine 174, serine 214, and 235 to 236 (GG) each bind substrate.

This sequence belongs to the triosephosphate isomerase family. Homodimer.

It localises to the cytoplasm. It carries out the reaction D-glyceraldehyde 3-phosphate = dihydroxyacetone phosphate. It participates in carbohydrate biosynthesis; gluconeogenesis. The protein operates within carbohydrate degradation; glycolysis; D-glyceraldehyde 3-phosphate from glycerone phosphate: step 1/1. Functionally, involved in the gluconeogenesis. Catalyzes stereospecifically the conversion of dihydroxyacetone phosphate (DHAP) to D-glyceraldehyde-3-phosphate (G3P). The chain is Triosephosphate isomerase from Cytophaga hutchinsonii (strain ATCC 33406 / DSM 1761 / CIP 103989 / NBRC 15051 / NCIMB 9469 / D465).